The sequence spans 94 residues: Co-chaperonin GroES (94 aa).

This sequence belongs to the GroES chaperonin family. In terms of assembly, heptamer of 7 subunits arranged in a ring. Interacts with the chaperonin GroEL.

The protein localises to the cytoplasm. Its function is as follows. Together with the chaperonin GroEL, plays an essential role in assisting protein folding. The GroEL-GroES system forms a nano-cage that allows encapsulation of the non-native substrate proteins and provides a physical environment optimized to promote and accelerate protein folding. GroES binds to the apical surface of the GroEL ring, thereby capping the opening of the GroEL channel. In Ehrlichia canis (strain Jake), this protein is Co-chaperonin GroES.